Here is a 739-residue protein sequence, read N- to C-terminus: Ent-kaurene synthase-like 3 (739 aa).

5 residues coordinate Mg(2+): aspartate 475, aspartate 479, asparagine 619, threonine 623, and glutamate 627. The DDXXD motif motif lies at 475–479; the sequence is DDFFD.

This sequence belongs to the terpene synthase family. Mg(2+) is required as a cofactor. Expressed in roots and stems.

This chain is Ent-kaurene synthase-like 3 (KSL3), found in Oryza sativa subsp. japonica (Rice).